Reading from the N-terminus, the 394-residue chain is Ornithine aminotransferase 1 (394 aa).

Lysine 252 is subject to N6-(pyridoxal phosphate)lysine.

The protein belongs to the class-III pyridoxal-phosphate-dependent aminotransferase family. OAT subfamily. Pyridoxal 5'-phosphate is required as a cofactor.

The protein localises to the cytoplasm. It carries out the reaction a 2-oxocarboxylate + L-ornithine = L-glutamate 5-semialdehyde + an L-alpha-amino acid. Its pathway is amino-acid biosynthesis; L-proline biosynthesis; L-glutamate 5-semialdehyde from L-ornithine: step 1/1. Functionally, catalyzes the interconversion of ornithine to glutamate semialdehyde. This Staphylococcus aureus (strain MRSA252) protein is Ornithine aminotransferase 1.